A 954-amino-acid polypeptide reads, in one-letter code: Glycine dehydrogenase (decarboxylating) (954 aa).

Lys-704 carries the N6-(pyridoxal phosphate)lysine modification.

It belongs to the GcvP family. In terms of assembly, the glycine cleavage system is composed of four proteins: P, T, L and H. Pyridoxal 5'-phosphate is required as a cofactor.

It catalyses the reaction N(6)-[(R)-lipoyl]-L-lysyl-[glycine-cleavage complex H protein] + glycine + H(+) = N(6)-[(R)-S(8)-aminomethyldihydrolipoyl]-L-lysyl-[glycine-cleavage complex H protein] + CO2. The glycine cleavage system catalyzes the degradation of glycine. The P protein binds the alpha-amino group of glycine through its pyridoxal phosphate cofactor; CO(2) is released and the remaining methylamine moiety is then transferred to the lipoamide cofactor of the H protein. This is Glycine dehydrogenase (decarboxylating) from Vibrio parahaemolyticus serotype O3:K6 (strain RIMD 2210633).